A 131-amino-acid polypeptide reads, in one-letter code: Small ribosomal subunit protein uS8 (131 aa).

The protein belongs to the universal ribosomal protein uS8 family. As to quaternary structure, part of the 30S ribosomal subunit. Contacts proteins S5 and S12.

In terms of biological role, one of the primary rRNA binding proteins, it binds directly to 16S rRNA central domain where it helps coordinate assembly of the platform of the 30S subunit. This chain is Small ribosomal subunit protein uS8, found in Shewanella amazonensis (strain ATCC BAA-1098 / SB2B).